The chain runs to 331 residues: Ketol-acid reductoisomerase (NADP(+)) (331 aa).

Positions 3–183 constitute a KARI N-terminal Rossmann domain; sequence AQMYYDDDAD…GGTRAGALKT (181 aa). NADP(+) contacts are provided by residues 26 to 29, serine 52, and serine 54; that span reads YGSQ. Residue histidine 109 is part of the active site. Glycine 135 contacts NADP(+). The KARI C-terminal knotted domain maps to 184 to 329; the sequence is TFKEETETDL…TELRSLMSWL (146 aa). Mg(2+)-binding residues include aspartate 192, glutamate 196, glutamate 228, and glutamate 232. Serine 253 provides a ligand contact to substrate.

The protein belongs to the ketol-acid reductoisomerase family. The cofactor is Mg(2+).

The catalysed reaction is (2R)-2,3-dihydroxy-3-methylbutanoate + NADP(+) = (2S)-2-acetolactate + NADPH + H(+). It catalyses the reaction (2R,3R)-2,3-dihydroxy-3-methylpentanoate + NADP(+) = (S)-2-ethyl-2-hydroxy-3-oxobutanoate + NADPH + H(+). It participates in amino-acid biosynthesis; L-isoleucine biosynthesis; L-isoleucine from 2-oxobutanoate: step 2/4. The protein operates within amino-acid biosynthesis; L-valine biosynthesis; L-valine from pyruvate: step 2/4. Functionally, involved in the biosynthesis of branched-chain amino acids (BCAA). Catalyzes an alkyl-migration followed by a ketol-acid reduction of (S)-2-acetolactate (S2AL) to yield (R)-2,3-dihydroxy-isovalerate. In the isomerase reaction, S2AL is rearranged via a Mg-dependent methyl migration to produce 3-hydroxy-3-methyl-2-ketobutyrate (HMKB). In the reductase reaction, this 2-ketoacid undergoes a metal-dependent reduction by NADPH to yield (R)-2,3-dihydroxy-isovalerate. This chain is Ketol-acid reductoisomerase (NADP(+)), found in Thermobifida fusca (strain YX).